We begin with the raw amino-acid sequence, 151 residues long: Protein-export protein SecB (151 aa).

The protein belongs to the SecB family. Homotetramer, a dimer of dimers. One homotetramer interacts with 1 SecA dimer.

The protein resides in the cytoplasm. One of the proteins required for the normal export of preproteins out of the cell cytoplasm. It is a molecular chaperone that binds to a subset of precursor proteins, maintaining them in a translocation-competent state. It also specifically binds to its receptor SecA. This chain is Protein-export protein SecB, found in Azoarcus sp. (strain BH72).